A 593-amino-acid chain; its full sequence is Aspartate--tRNA(Asp/Asn) ligase (593 aa).

Residue glutamate 173 participates in L-aspartate binding. The aspartate stretch occupies residues 197–200; the sequence is QLFK. Arginine 219 lines the L-aspartate pocket. Residues 219-221 and glutamine 228 contribute to the ATP site; that span reads RDE. Histidine 451 is a binding site for L-aspartate. Residue glutamate 485 coordinates ATP. Arginine 492 is an L-aspartate binding site. 537-540 provides a ligand contact to ATP; sequence GIDR.

The protein belongs to the class-II aminoacyl-tRNA synthetase family. Type 1 subfamily. As to quaternary structure, homodimer.

It localises to the cytoplasm. The catalysed reaction is tRNA(Asx) + L-aspartate + ATP = L-aspartyl-tRNA(Asx) + AMP + diphosphate. Aspartyl-tRNA synthetase with relaxed tRNA specificity since it is able to aspartylate not only its cognate tRNA(Asp) but also tRNA(Asn). Reaction proceeds in two steps: L-aspartate is first activated by ATP to form Asp-AMP and then transferred to the acceptor end of tRNA(Asp/Asn). The chain is Aspartate--tRNA(Asp/Asn) ligase from Legionella pneumophila (strain Corby).